A 326-amino-acid polypeptide reads, in one-letter code: Peroxidase 43 (326 aa).

Residues M1–A24 form the signal peptide. 4 cysteine pairs are disulfide-bonded: C35-C112, C68-C73, C118-C322, and C196-C228. Residue H66 is the Proton acceptor of the active site. The Ca(2+) site is built by D67, V70, G72, D74, and S76. A glycan (N-linked (GlcNAc...) asparagine) is linked at N151. Residue P159 coordinates substrate. H189 is a heme b binding site. T190 is a Ca(2+) binding site. D241, S244, and D249 together coordinate Ca(2+).

This sequence belongs to the peroxidase family. Classical plant (class III) peroxidase subfamily. Heme b serves as cofactor. The cofactor is Ca(2+).

The protein localises to the secreted. It carries out the reaction 2 a phenolic donor + H2O2 = 2 a phenolic radical donor + 2 H2O. In terms of biological role, removal of H(2)O(2), oxidation of toxic reductants, biosynthesis and degradation of lignin, suberization, auxin catabolism, response to environmental stresses such as wounding, pathogen attack and oxidative stress. These functions might be dependent on each isozyme/isoform in each plant tissue. This chain is Peroxidase 43 (PER43), found in Arabidopsis thaliana (Mouse-ear cress).